A 399-amino-acid chain; its full sequence is Lovastatin esterase (399 aa).

Ser57 (nucleophile) is an active-site residue. Catalysis depends on proton acceptor residues Lys60 and Tyr170.

It belongs to the class-A beta-lactamase family.

It carries out the reaction lovastatin + H2O = monacolin J + (S)-2-methylbutanoate + H(+). The catalysed reaction is pravastatin lactone + H2O = pravastatin diol lactone + (S)-2-methylbutanoate + H(+). The enzyme catalyses mevastatin + H2O = compactin diol lactone + (S)-2-methylbutanoate + H(+). Its function is as follows. Esterase that can hydrolyze the side chain of lovastatin to produce monacolin J. Is also able to hydrolyze the side chains of mevastatin and pravastatin, but not simvastatin. In Penicillium rubens (strain ATCC 28089 / DSM 1075 / NRRL 1951 / Wisconsin 54-1255) (Penicillium chrysogenum), this protein is Lovastatin esterase.